Consider the following 381-residue polypeptide: Homoserine O-succinyltransferase (381 aa).

In terms of domain architecture, AB hydrolase-1 spans 45–360 (NAVLVCHALN…PHGHDAFLLD (316 aa)). Catalysis depends on Ser151, which acts as the Nucleophile. Arg221 serves as a coordination point for substrate. Residues Asp321 and His354 contribute to the active site. Asp355 provides a ligand contact to substrate.

It belongs to the AB hydrolase superfamily. MetX family. Homodimer.

The protein resides in the cytoplasm. It carries out the reaction L-homoserine + succinyl-CoA = O-succinyl-L-homoserine + CoA. It participates in amino-acid biosynthesis; L-methionine biosynthesis via de novo pathway; O-succinyl-L-homoserine from L-homoserine: step 1/1. Functionally, transfers a succinyl group from succinyl-CoA to L-homoserine, forming succinyl-L-homoserine. The protein is Homoserine O-succinyltransferase of Paraburkholderia phytofirmans (strain DSM 17436 / LMG 22146 / PsJN) (Burkholderia phytofirmans).